The chain runs to 1481 residues: Cystic fibrosis transmembrane conductance regulator (1481 aa).

Topologically, residues 1-77 (MQRSPLEKAS…KLINALRRCF (77 aa)) are cytoplasmic. Residues 78–98 (FWRFMFYGILLYLGEVTKAVQ) form a helical membrane-spanning segment. The 285-residue stretch at 81–365 (FMFYGILLYL…WAVQTWYDSL (285 aa)) folds into the ABC transmembrane type-1 1 domain. Residues 99–122 (PLLLGRIIASYDPDNKEERSIAIY) are Extracellular-facing. The helical transmembrane segment at 123 to 146 (LGIGLCLLFIVRTLLLHPAIFGLH) threads the bilayer. The Cytoplasmic portion of the chain corresponds to 147 to 195 (HIGMQMRIAMFSLIYKKTLKLSSRVLDKISIGQLVSLLSNNLNKFDEGL). A helical transmembrane segment spans residues 196 to 216 (ALAHFVWIVPLQVALLMGLIW). The Extracellular portion of the chain corresponds to 217 to 222 (ELLQAS). The chain crosses the membrane as a helical span at residues 223–243 (AFCGLGFLIVLALFQAGLGRM). The Cytoplasmic segment spans residues 244-298 (MMKYRDQRAGKINERLVITSEMIENIQSVKAYCWEEAMEKMIENLRQTELKLTRK). Residues 299-319 (AAYVRYFNSSAFFFSGFFVVF) form a helical membrane-spanning segment. At 320–339 (LSVLPYALIKGIVLRKIFTT) the chain is on the extracellular side. A helical transmembrane segment spans residues 340 to 358 (ISFCIVLRMAVTRQFPWAV). Residues 359–858 (QTWYDSLGAI…YLRYITVHKS (500 aa)) are Cytoplasmic-facing. Residues Trp-401, Ser-434, 458–465 (GSTGAGKT), and Gln-493 each bind ATP. The region spanning 423–646 (NDDDSLFFSN…RPDFSSKLMG (224 aa)) is the ABC transporter 1 domain. Cys-524 is lipidated: S-palmitoyl cysteine. 2 positions are modified to phosphoserine: Ser-549 and Ser-660. Residues 654-831 (SAERRNSILT…EEINEEDLKE (178 aa)) are disordered R region. Ser-670 bears the Phosphoserine; by PKA mark. Residue Ser-686 is modified to Phosphoserine. Lys-688 is covalently cross-linked (Glycyl lysine isopeptide (Lys-Gly) (interchain with G-Cter in ubiquitin)). Ser-700 and Ser-712 each carry phosphoserine. Thr-717 carries the post-translational modification Phosphothreonine. Phosphoserine is present on residues Ser-737, Ser-753, Ser-768, Ser-790, Ser-795, and Ser-813. The chain crosses the membrane as a helical span at residues 859–879 (LIFVLIWCLVIFLAEVAASLV). The region spanning 859-1155 (LIFVLIWCLV…AVNSSIDVDS (297 aa)) is the ABC transmembrane type-1 2 domain. The Extracellular portion of the chain corresponds to 880 to 918 (VLWFLGNTPPQDKGNSTYSRNNSYAVIITRTSSYYVFYI). Residues Asn-894 and Asn-900 are each glycosylated (N-linked (GlcNAc...) asparagine). A discontinuously helical membrane pass occupies residues 919–939 (YVGVADTLLAMGFFRGLPLVH). At 940–990 (TLITVSKILHHKMLHSVLQAPMSTLNTLKAGGILNRFSKDIAILDDLLPLT) the chain is on the cytoplasmic side. A helical transmembrane segment spans residues 991-1011 (IFDFIQLLLIVIGAIAVVAVL). Residues 1012–1013 (QP) lie on the Extracellular side of the membrane. Residues 1014–1034 (YIFVATVPVIVAFIMLRAYFL) form a helical membrane-spanning segment. The Cytoplasmic segment spans residues 1035 to 1095 (QTSQQLKQLE…TANWFLYLST (61 aa)). Residues 1096–1116 (LRWFQMRIEMIFVIFFIAVTF) traverse the membrane as a helical segment. Residues 1117–1130 (ISILTTGEGEGTVG) are Extracellular-facing. Residues 1131–1151 (IILTLAMNIMSTLQWAVNSSI) traverse the membrane as a helical segment. The Cytoplasmic portion of the chain corresponds to 1152-1481 (DVDSLMRSVS…TEEEVQDTRL (330 aa)). Residues 1211-1444 (MTVKDLTAKY…RSLFQQAISP (234 aa)) enclose the ABC transporter 2 domain. ATP-binding positions include Tyr-1220 and 1245–1252 (GRTGSGKS). The tract at residues 1387-1481 (RTLKQAFADC…TEEEVQDTRL (95 aa)) is interaction with GORASP2. Residue Cys-1396 is the site of S-palmitoyl cysteine attachment. Residues Ser-1445 and Ser-1457 each carry the phosphoserine modification. The short motif at 1479–1481 (TRL) is the PDZ-binding element.

This sequence belongs to the ABC transporter superfamily. ABCC family. CFTR transporter (TC 3.A.1.202) subfamily. As to quaternary structure, monomer; does not require oligomerization for channel activity. May form oligomers in the membrane. Interacts with SLC26A3, SLC26A6 and NHERF1. Interacts with SHANK2. Interacts with MYO6. Interacts (via C-terminus) with GOPC (via PDZ domain); this promotes CFTR internalization and thereby decreases channel activity. Interacts with SLC4A7 through NHERF1. Found in a complex with MYO5B and RAB11A. Interacts with ANO1. Interacts with SLC26A8. Interacts with AHCYL1; the interaction increases CFTR activity. Interacts with CSE1L. The core-glycosylated form interacts with GORASP2 (via PDZ GRASP-type 1 domain) in respone to ER stress. Interacts with MARCHF2; the interaction leads to CFTR ubiqtuitination and degradation. Interacts with ADGRG2. Post-translationally, N-glycosylated. In terms of processing, phosphorylated; cAMP treatment promotes phosphorylation and activates the channel. Dephosphorylation decreases the ATPase activity (in vitro). Phosphorylation at PKA sites activates the channel. Phosphorylation at PKC sites enhances the response to phosphorylation by PKA. Phosphorylated by AMPK; this inhibits channel activity. Ubiquitinated, leading to its degradation in the lysosome. Deubiquitination by USP10 in early endosomes enhances its endocytic recycling to the cell membrane. Ubiquitinated by RNF185 during ER stress. Ubiquitinated by MARCHF2.

Its subcellular location is the apical cell membrane. It localises to the early endosome membrane. It is found in the cell membrane. The protein localises to the recycling endosome membrane. The protein resides in the endoplasmic reticulum membrane. Its subcellular location is the nucleus. It catalyses the reaction ATP + H2O + closed Cl(-) channel = ADP + phosphate + open Cl(-) channel.. The catalysed reaction is chloride(in) = chloride(out). It carries out the reaction hydrogencarbonate(in) = hydrogencarbonate(out). The enzyme catalyses ATP + H2O = ADP + phosphate + H(+). Its function is as follows. Epithelial ion channel that plays an important role in the regulation of epithelial ion and water transport and fluid homeostasis. Mediates the transport of chloride ions across the cell membrane. Possesses an intrinsic ATPase activity and utilizes ATP to gate its channel; the passive flow of anions through the channel is gated by cycles of ATP binding and hydrolysis by the ATP-binding domains. The ion channel is also permeable to HCO(3)(-); selectivity depends on the extracellular chloride concentration. Exerts its function also by modulating the activity of other ion channels and transporters. Contributes to the regulation of the pH and the ion content of the epithelial fluid layer. Modulates the activity of the epithelial sodium channel (ENaC) complex, in part by regulating the cell surface expression of the ENaC complex. May regulate bicarbonate secretion and salvage in epithelial cells by regulating the transporter SLC4A7. Can inhibit the chloride channel activity of ANO1. Plays a role in the chloride and bicarbonate homeostasis during sperm epididymal maturation and capacitation. The chain is Cystic fibrosis transmembrane conductance regulator from Macaca nemestrina (Pig-tailed macaque).